A 350-amino-acid polypeptide reads, in one-letter code: 4-hydroxy-2-oxovalerate aldolase 2 (350 aa).

In terms of domain architecture, Pyruvate carboxyltransferase spans 8–260 (ITVHDMTLRD…ETGVDVFKIQ (253 aa)). 16–17 (RD) contributes to the substrate binding site. D17 contributes to the Mn(2+) binding site. Catalysis depends on H20, which acts as the Proton acceptor. Residues S170 and H199 each coordinate substrate. 2 residues coordinate Mn(2+): H199 and H201. A substrate-binding site is contributed by Y290.

This sequence belongs to the 4-hydroxy-2-oxovalerate aldolase family.

The catalysed reaction is (S)-4-hydroxy-2-oxopentanoate = acetaldehyde + pyruvate. In Comamonas testosteroni (Pseudomonas testosteroni), this protein is 4-hydroxy-2-oxovalerate aldolase 2 (tesG).